Reading from the N-terminus, the 70-residue chain is Mu-conotoxin-like Am3.4 (70 aa).

Positions 1–20 (MMYKLGVLLIICLLLFPLTA) are cleaved as a signal peptide. Residues 21–53 (VPQDGDQPADRPAERMQDDISFEHDRFFDPVKR) constitute a propeptide that is removed on maturation. 3 disulfide bridges follow: Cys-54/Cys-69, Cys-55/Cys-65, and Cys-61/Cys-68. Pro-67 carries the post-translational modification 4-hydroxyproline; partial; in major form. The residue at position 69 (Cys-69) is a Cysteine amide.

It belongs to the conotoxin M superfamily. Post-translationally, contains 3 disulfide bonds. As to expression, expressed by the venom duct.

The protein localises to the secreted. Mu-conotoxins block voltage-gated sodium channels (Nav). In Conus amadis (Amadis cone), this protein is Mu-conotoxin-like Am3.4.